The chain runs to 131 residues: uncharacterized protein (131 aa).

Positions 15-43 (QLQAEHGSAPSNIASGPSSNQQQQEVQDE) are disordered. Residues 23–34 (APSNIASGPSSN) are compositionally biased toward polar residues.

The protein belongs to the PDCD5 family.

This is an uncharacterized protein from Schizosaccharomyces pombe (strain 972 / ATCC 24843) (Fission yeast).